Here is an 85-residue protein sequence, read N- to C-terminus: Cytochrome c6 (85 aa).

Heme c is bound by residues C14, C17, H18, and M58.

It belongs to the cytochrome c family. PetJ subfamily. As to quaternary structure, monomer. Post-translationally, binds 1 heme c group covalently per subunit.

Its subcellular location is the plastid. The protein resides in the chloroplast thylakoid lumen. In terms of biological role, functions as an electron carrier between membrane-bound cytochrome b6-f and photosystem I in oxygenic photosynthesis. The polypeptide is Cytochrome c6 (petJ) (Pyropia tenera (Nori)).